The chain runs to 488 residues: Malonate-semialdehyde dehydrogenase (488 aa).

Residues A150, F152, K176, E179, R180, S229, and T251 each contribute to the NAD(+) site. The active-site Nucleophile is the C284. NAD(+) is bound at residue E382.

Belongs to the aldehyde dehydrogenase family. IolA subfamily. In terms of assembly, homotetramer.

It carries out the reaction 3-oxopropanoate + NAD(+) + CoA + H2O = hydrogencarbonate + acetyl-CoA + NADH + H(+). The catalysed reaction is 2-methyl-3-oxopropanoate + NAD(+) + CoA + H2O = propanoyl-CoA + hydrogencarbonate + NADH + H(+). It participates in polyol metabolism; myo-inositol degradation into acetyl-CoA; acetyl-CoA from myo-inositol: step 7/7. In terms of biological role, catalyzes the oxidation of malonate semialdehyde (MSA) and methylmalonate semialdehyde (MMSA) into acetyl-CoA and propanoyl-CoA, respectively. Is involved in a myo-inositol catabolic pathway. Bicarbonate, and not CO2, is the end-product of the enzymatic reaction. The chain is Malonate-semialdehyde dehydrogenase from Listeria monocytogenes serotype 4b (strain F2365).